The chain runs to 346 residues: Putative D-alanine--D-lactate ligase (346 aa).

Positions 137–338 (YVVARSAGIA…LSEVIDRTLS (202 aa)) constitute an ATP-grasp domain. 163 to 216 (RLTYPVFVKPARSGSSFGVSKVCRPEDLATAVESARRYDTKVLIEAAVVGSEVG) is an ATP binding site. Mg(2+) is bound by residues Asp292, Glu305, and Asn307.

Belongs to the D-alanine--D-alanine ligase family. The cofactor is Mg(2+). Requires Mn(2+) as cofactor.

The protein resides in the cell membrane. In terms of biological role, required for resistance to glycopeptides antibiotics. D-Ala--D-Ala ligase of altered specificity which catalyzes ester bond formation between D-Ala and various D-hydroxy acids; producing a peptidoglycan which does not terminate by D-alanine but by D-lactate, thus preventing vancomycin binding. The protein is Putative D-alanine--D-lactate ligase of Streptomyces coelicolor (strain ATCC BAA-471 / A3(2) / M145).